Here is a 256-residue protein sequence, read N- to C-terminus: V-type proton ATPase subunit D (256 aa).

Positions 211–230 (QNETAKLDAEMKLKRDRAEQ) are enriched in basic and acidic residues. Residues 211–256 (QNETAKLDAEMKLKRDRAEQDASEVAADEEPQGETLVADQEDDVIF) are disordered.

The protein belongs to the V-ATPase D subunit family. In terms of assembly, V-ATPase is a heteromultimeric enzyme composed of a peripheral catalytic V1 complex (components A to H) attached to an integral membrane V0 proton pore complex (components: a, c, c', c'', d, e, f and VOA1). Interacts with RAV1 and RAV2 components of the RAVE complex, which are essential for the stability and assembly of V-ATPase.

The protein resides in the vacuole membrane. Its function is as follows. Subunit of the V1 complex of vacuolar(H+)-ATPase (V-ATPase), a multisubunit enzyme composed of a peripheral complex (V1) that hydrolyzes ATP and a membrane integral complex (V0) that translocates protons. V-ATPase is responsible for acidifying and maintaining the pH of intracellular compartments. This chain is V-type proton ATPase subunit D, found in Saccharomyces cerevisiae (strain ATCC 204508 / S288c) (Baker's yeast).